The following is a 332-amino-acid chain: tRNA-dihydrouridine synthase B (332 aa).

FMN is bound by residues proline 16 to alanine 18 and glutamine 70. The active-site Proton donor is the cysteine 100. Residues lysine 139, asparagine 200–aspartate 202, and glycine 224–arginine 225 contribute to the FMN site.

The protein belongs to the Dus family. DusB subfamily. FMN is required as a cofactor.

It carries out the reaction a 5,6-dihydrouridine in tRNA + NAD(+) = a uridine in tRNA + NADH + H(+). The enzyme catalyses a 5,6-dihydrouridine in tRNA + NADP(+) = a uridine in tRNA + NADPH + H(+). Its function is as follows. Catalyzes the synthesis of 5,6-dihydrouridine (D), a modified base found in the D-loop of most tRNAs, via the reduction of the C5-C6 double bond in target uridines. The protein is tRNA-dihydrouridine synthase B of Xanthomonas campestris pv. campestris (strain ATCC 33913 / DSM 3586 / NCPPB 528 / LMG 568 / P 25).